The chain runs to 455 residues: UDP-N-acetylmuramoylalanine--D-glutamate ligase (455 aa).

119-125 (GTNGKTT) contacts ATP.

It belongs to the MurCDEF family.

The protein resides in the cytoplasm. It catalyses the reaction UDP-N-acetyl-alpha-D-muramoyl-L-alanine + D-glutamate + ATP = UDP-N-acetyl-alpha-D-muramoyl-L-alanyl-D-glutamate + ADP + phosphate + H(+). The protein operates within cell wall biogenesis; peptidoglycan biosynthesis. Its function is as follows. Cell wall formation. Catalyzes the addition of glutamate to the nucleotide precursor UDP-N-acetylmuramoyl-L-alanine (UMA). This is UDP-N-acetylmuramoylalanine--D-glutamate ligase from Listeria monocytogenes serovar 1/2a (strain ATCC BAA-679 / EGD-e).